The primary structure comprises 372 residues: Adaptive-response sensory-kinase SasA (372 aa).

The Histidine kinase domain maps to 147–360 (MVAHELRTPL…CFHFTVPVWQ (214 aa)). His150 carries the post-translational modification Phosphohistidine; by autocatalysis.

As to quaternary structure, homooligomerizes. Interacts with KaiC. Participates in the KaiBC complex, whose core is composed of a KaiC homohexamer and 6 KaiB.

It carries out the reaction ATP + protein L-histidine = ADP + protein N-phospho-L-histidine.. Its function is as follows. Member of the two-component regulatory system SasA/RpaA involved in genome-wide circadian gene expression. One of several clock output pathways. Participates in the Kai clock protein complex, the main circadian regulator in cyanobacteria, via its interaction with KaiC. KaiC enhances the autophosphorylation activity of SasA, which then transfers its phosphate group to RpaA to activate it. In addition to its output function, recruits fold-shifted KaiB (KaiB(fs)) to KaiC to cooperatively form the KaiB(6):KaiC(6) complex (independent of SasA kinase activity). Required for robustness of the circadian rhythm of gene expression and is involved in clock output, also required for adaptation to light/dark cycles. The chain is Adaptive-response sensory-kinase SasA from Prochlorococcus marinus subsp. pastoris (strain CCMP1986 / NIES-2087 / MED4).